A 219-amino-acid chain; its full sequence is Ras-like protein 1 (219 aa).

Residue 15-22 coordinates GTP; that stretch reads GDGGVGKS. The Effector region signature appears at 37-45; sequence YDPTIEDSY. GTP-binding positions include 62-66 and 121-124; these read DTAGQ and NKCD. C216 is subject to Cysteine methyl ester. C216 is lipidated: S-farnesyl cysteine. The propeptide at 217–219 is removed in mature form; it reads VIC.

This sequence belongs to the small GTPase superfamily. Ras family. Scd1, scd2, cdc42, and ras1, in its GTP-bound state, act cooperatively to form a protein complex. Post-translationally, palmitoylated by the erf2-erf4 complex.

The protein localises to the cell membrane. It catalyses the reaction GTP + H2O = GDP + phosphate + H(+). Alternates between an inactive form bound to GDP and an active form bound to GTP. Activated by a guanine nucleotide-exchange factor (GEF) and inactivated by a GTPase-activating protein (GAP). Functionally, participates in the process of sexual differentiation and the determination of cell shape. Essential for mating and for recognition of the mating pheromone, but not for vegetative growth. Does not regulate the intracellular cAMP level. Regulates two downstream pathways, namely the byr2/byr1/spk1 mitogen-activated protein kinase cascade and the cdc42 small G protein pathway. The former is relevant to mating and sporulation, whereas the latter is relevant to mating, cell growth and cell morphology. This Schizosaccharomyces pombe (strain 972 / ATCC 24843) (Fission yeast) protein is Ras-like protein 1 (ras1).